The following is a 152-amino-acid chain: Proteolipid protein 2 (152 aa).

N-linked (GlcNAc...) asparagine glycosylation occurs at asparagine 18. The MARVEL domain occupies 19–137; it reads FSRTRKGILL…DAYVTFPVRQ (119 aa). 3 helical membrane-spanning segments follow: residues 25-45, 48-68, and 85-105; these read GILLFAEIILCLVILICFSAS, GYSSLSVIEMILAAIFFVVYM, and FFRTLIAAILYLITSIVVLVE. Asparagine 108 is a glycosylation site (N-linked (GlcNAc...) asparagine). The helical transmembrane segment at 112-132 threads the bilayer; the sequence is IVAGVLGLIATCLFGYDAYVT.

Enriched in colonic mucosa. The expression of A4 follows a gradient along the crypto-villus axis with the most abundant message occurring in the lower half of the crypt.

The protein localises to the membrane. May play a role in cell differentiation in the intestinal epithelium. The sequence is that of Proteolipid protein 2 (PLP2) from Homo sapiens (Human).